A 197-amino-acid chain; its full sequence is Fe/S biogenesis protein NfuA (197 aa).

Residues Cys-155 and Cys-158 each contribute to the [4Fe-4S] cluster site.

The protein belongs to the NfuA family. Homodimer. It depends on [4Fe-4S] cluster as a cofactor.

Involved in iron-sulfur cluster biogenesis. Binds a 4Fe-4S cluster, can transfer this cluster to apoproteins, and thereby intervenes in the maturation of Fe/S proteins. Could also act as a scaffold/chaperone for damaged Fe/S proteins. This Pseudomonas syringae pv. syringae (strain B728a) protein is Fe/S biogenesis protein NfuA.